Reading from the N-terminus, the 220-residue chain is Ribosome maturation factor RimP (220 aa).

The segment covering 1-15 has biased composition (low complexity); it reads MSQRGRATRPTGPTG. 2 disordered regions span residues 1 to 35 and 184 to 220; these read MSQR…GGDL and PGRV…GEER. Positions 198 to 220 are enriched in acidic residues; that stretch reads DGADGADEAGDFDDDDDVEGEER.

This sequence belongs to the RimP family.

It is found in the cytoplasm. Required for maturation of 30S ribosomal subunits. The protein is Ribosome maturation factor RimP of Salinispora tropica (strain ATCC BAA-916 / DSM 44818 / JCM 13857 / NBRC 105044 / CNB-440).